The primary structure comprises 160 residues: Ribosomal RNA large subunit methyltransferase H (160 aa).

Residues Leu76 and Gly108 each coordinate S-adenosyl-L-methionine.

The protein belongs to the RNA methyltransferase RlmH family. Homodimer.

The protein localises to the cytoplasm. It carries out the reaction pseudouridine(1915) in 23S rRNA + S-adenosyl-L-methionine = N(3)-methylpseudouridine(1915) in 23S rRNA + S-adenosyl-L-homocysteine + H(+). Functionally, specifically methylates the pseudouridine at position 1915 (m3Psi1915) in 23S rRNA. The chain is Ribosomal RNA large subunit methyltransferase H from Bradyrhizobium diazoefficiens (strain JCM 10833 / BCRC 13528 / IAM 13628 / NBRC 14792 / USDA 110).